Consider the following 481-residue polypeptide: Threonine synthase (481 aa).

Lys118 carries the N6-(pyridoxal phosphate)lysine modification.

The protein belongs to the threonine synthase family. In terms of assembly, monomer. Pyridoxal 5'-phosphate serves as cofactor.

The catalysed reaction is O-phospho-L-homoserine + H2O = L-threonine + phosphate. It functions in the pathway amino-acid biosynthesis; L-threonine biosynthesis; L-threonine from L-aspartate: step 5/5. Its function is as follows. Catalyzes the gamma-elimination of phosphate from L-phosphohomoserine and the beta-addition of water to produce L-threonine. The protein is Threonine synthase (thrC) of Corynebacterium glutamicum (strain ATCC 13032 / DSM 20300 / JCM 1318 / BCRC 11384 / CCUG 27702 / LMG 3730 / NBRC 12168 / NCIMB 10025 / NRRL B-2784 / 534).